Reading from the N-terminus, the 175-residue chain is Ribosome-binding factor A (175 aa).

The disordered stretch occupies residues Lys-131 to Asp-175. Residues Leu-162–Asp-175 show a composition bias toward acidic residues.

The protein belongs to the RbfA family. In terms of assembly, monomer. Binds 30S ribosomal subunits, but not 50S ribosomal subunits or 70S ribosomes.

It is found in the cytoplasm. Functionally, one of several proteins that assist in the late maturation steps of the functional core of the 30S ribosomal subunit. Associates with free 30S ribosomal subunits (but not with 30S subunits that are part of 70S ribosomes or polysomes). Required for efficient processing of 16S rRNA. May interact with the 5'-terminal helix region of 16S rRNA. This Mycobacterium ulcerans (strain Agy99) protein is Ribosome-binding factor A.